The sequence spans 371 residues: LIM domain-binding protein 2 (371 aa).

2 disordered regions span residues 244-289 (APPA…AAAN) and 325-371 (QYDA…QASQ). Residues 263 to 289 (STSSTSNSSAGNNANSTNSKKKSAAAN) show a composition bias toward low complexity. The region spanning 296-335 (DVMVVGEPTLMGGEFGDEDERLITRLENTQYDAANGMDDE) is the LIM interaction domain (LID) domain. Residues 339–371 (NNSPALGNNSPWNSKPPANQETKSENPTPQASQ) are compositionally biased toward polar residues.

It belongs to the LDB family. First expressed at stages 15-16 in presumptive limb mesoderm. As limb outgrowth proceeds, expressed in the entire limb bud, concentrating in the distal mesoderm throughout limb development. Both hindlimbs and forelimbs exhibit similar expression patterns.

It localises to the nucleus. Binds to the LIM domain of a wide variety of LIM domain-containing transcription factors. The protein is LIM domain-binding protein 2 (LDB2) of Gallus gallus (Chicken).